We begin with the raw amino-acid sequence, 398 residues long: Elongation factor Tu (398 aa).

Residues 10-207 (KPHVNIGTIG…TVDDYIPDPE (198 aa)) enclose the tr-type G domain. The interval 19-26 (GHVDHGKT) is G1. GTP is bound at residue 19 to 26 (GHVDHGKT). A Mg(2+)-binding site is contributed by T26. The tract at residues 63 to 67 (GITIN) is G2. Residues 84 to 87 (DAPG) form a G3 region. Residues 84-88 (DAPGH) and 139-142 (NKVD) each bind GTP. A G4 region spans residues 139 to 142 (NKVD). A G5 region spans residues 177 to 179 (SAL).

It belongs to the TRAFAC class translation factor GTPase superfamily. Classic translation factor GTPase family. EF-Tu/EF-1A subfamily. In terms of assembly, monomer.

It is found in the cytoplasm. The catalysed reaction is GTP + H2O = GDP + phosphate + H(+). Functionally, GTP hydrolase that promotes the GTP-dependent binding of aminoacyl-tRNA to the A-site of ribosomes during protein biosynthesis. The protein is Elongation factor Tu of Streptococcus mutans serotype c (strain ATCC 700610 / UA159).